A 111-amino-acid polypeptide reads, in one-letter code: Beta-2-microglobulin (111 aa).

The first 17 residues, M1 to P17, serve as a signal peptide directing secretion. One can recognise an Ig-like C1-type domain in the interval P20 to F111.

Belongs to the beta-2-microglobulin family. Heterodimer of an alpha chain and a beta chain. Beta-2-microglobulin is the beta-chain of major histocompatibility complex class I molecules.

It is found in the secreted. Functionally, component of the class I major histocompatibility complex (MHC). Involved in the presentation of peptide antigens to the immune system. The polypeptide is Beta-2-microglobulin (b2m) (Rostroraja eglanteria (Clearnose skate)).